The primary structure comprises 88 residues: MSSRRSSRGSISEEEINELISKLQSLLPNSRRRGSSQASTTKLLKETCNYIKSLHREVDDLSDRLSDLMATMDHNSPGAEIIRSILRS.

The 54-residue stretch at 1–54 (MSSRRSSRGSISEEEINELISKLQSLLPNSRRRGSSQASTTKLLKETCNYIKSL) folds into the bHLH domain.

This sequence belongs to the bHLH protein family. Interacts with APG.

The protein resides in the nucleus. Atypical and probable non DNA-binding bHLH transcription factor that acts as a positive regulator of grain size. Binds the transcription repressor APG and forms a heterodimer of antagonistic basic helix-loop-helix transcription factors that regulates grain length and weight by controlling cell elongation in lemma and palea. This is Transcription factor ILI5 (ILI5) from Oryza sativa subsp. indica (Rice).